Here is a 227-residue protein sequence, read N- to C-terminus: NADH-quinone oxidoreductase subunit C (227 aa).

It belongs to the complex I 30 kDa subunit family. In terms of assembly, NDH-1 is composed of 14 different subunits. Subunits NuoB, C, D, E, F, and G constitute the peripheral sector of the complex.

The protein localises to the cell inner membrane. The enzyme catalyses a quinone + NADH + 5 H(+)(in) = a quinol + NAD(+) + 4 H(+)(out). In terms of biological role, NDH-1 shuttles electrons from NADH, via FMN and iron-sulfur (Fe-S) centers, to quinones in the respiratory chain. The immediate electron acceptor for the enzyme in this species is believed to be ubiquinone. Couples the redox reaction to proton translocation (for every two electrons transferred, four hydrogen ions are translocated across the cytoplasmic membrane), and thus conserves the redox energy in a proton gradient. This is NADH-quinone oxidoreductase subunit C from Legionella pneumophila (strain Corby).